The sequence spans 556 residues: Glutamine--tRNA ligase (556 aa).

The short motif at 34–44 is the 'HIGH' region element; it reads PEPNGYLHIGH. Residues 35-37 and 41-47 contribute to the ATP site; these read EPN and HIGHAKS. 2 residues coordinate L-glutamine: Asp-67 and Tyr-212. ATP is bound by residues Thr-231, 261 to 262, and 269 to 271; these read RL and MSK. The short motif at 268–272 is the 'KMSKS' region element; it reads VMSKR.

Belongs to the class-I aminoacyl-tRNA synthetase family. As to quaternary structure, monomer.

Its subcellular location is the cytoplasm. It carries out the reaction tRNA(Gln) + L-glutamine + ATP = L-glutaminyl-tRNA(Gln) + AMP + diphosphate. The polypeptide is Glutamine--tRNA ligase (Vibrio vulnificus (strain YJ016)).